A 431-amino-acid chain; its full sequence is Adenylosuccinate lyase (431 aa).

N(6)-(1,2-dicarboxyethyl)-AMP is bound by residues 4–5 (RY), 67–69 (RHD), and 93–94 (TS). Histidine 141 functions as the Proton donor/acceptor in the catalytic mechanism. Glutamine 212 is a binding site for N(6)-(1,2-dicarboxyethyl)-AMP. Serine 262 (proton donor/acceptor) is an active-site residue. N(6)-(1,2-dicarboxyethyl)-AMP is bound by residues serine 263, 268-270 (KRN), asparagine 276, and 307-311 (SAERI).

Belongs to the lyase 1 family. Adenylosuccinate lyase subfamily. Homotetramer. Residues from neighboring subunits contribute catalytic and substrate-binding residues to each active site.

It carries out the reaction N(6)-(1,2-dicarboxyethyl)-AMP = fumarate + AMP. The enzyme catalyses (2S)-2-[5-amino-1-(5-phospho-beta-D-ribosyl)imidazole-4-carboxamido]succinate = 5-amino-1-(5-phospho-beta-D-ribosyl)imidazole-4-carboxamide + fumarate. It participates in purine metabolism; AMP biosynthesis via de novo pathway; AMP from IMP: step 2/2. It functions in the pathway purine metabolism; IMP biosynthesis via de novo pathway; 5-amino-1-(5-phospho-D-ribosyl)imidazole-4-carboxamide from 5-amino-1-(5-phospho-D-ribosyl)imidazole-4-carboxylate: step 2/2. Its function is as follows. Catalyzes two reactions in de novo purine nucleotide biosynthesis. Catalyzes the breakdown of 5-aminoimidazole- (N-succinylocarboxamide) ribotide (SAICAR or 2-[5-amino-1-(5-phospho-beta-D-ribosyl)imidazole-4-carboxamido]succinate) to 5-aminoimidazole-4-carboxamide ribotide (AICAR or 5-amino-1-(5-phospho-beta-D-ribosyl)imidazole-4-carboxamide) and fumarate, and of adenylosuccinate (ADS or N(6)-(1,2-dicarboxyethyl)-AMP) to adenosine monophosphate (AMP) and fumarate. Influences the affinity of glutamyl--tRNA ligase for its substrates and increases its thermostability. This is Adenylosuccinate lyase (purB) from Bacillus subtilis (strain 168).